The chain runs to 179 residues: MAEEVNSPNEAVNLQEETAIAPVGPVSTWLTTNGFEHQSLTADHLGVEMVQVEADLLLPLCTALYAYGFNYLQCQGAYDEGPGKSLVSFYHLVKLTEDTRNPEEVRLKVFLPRENPVVPSVYWIWKAADWQERECYDMFGIVYEGHPNLKRILMPEDWVGWPLRKDYISPDFYELQDAY.

It belongs to the complex I 30 kDa subunit family. As to quaternary structure, NDH-1 can be composed of about 15 different subunits; different subcomplexes with different compositions have been identified which probably have different functions. In at one experiment the initiator methionine has been seen to be kept and removed.

It is found in the cellular thylakoid membrane. It carries out the reaction a plastoquinone + NADH + (n+1) H(+)(in) = a plastoquinol + NAD(+) + n H(+)(out). The catalysed reaction is a plastoquinone + NADPH + (n+1) H(+)(in) = a plastoquinol + NADP(+) + n H(+)(out). Functionally, NDH-1 shuttles electrons from an unknown electron donor, via FMN and iron-sulfur (Fe-S) centers, to quinones in the respiratory and/or the photosynthetic chain. The immediate electron acceptor for the enzyme in this species is believed to be plastoquinone. Couples the redox reaction to proton translocation, and thus conserves the redox energy in a proton gradient. Cyanobacterial NDH-1 also plays a role in inorganic carbon-concentration. The polypeptide is NAD(P)H-quinone oxidoreductase subunit J (Synechocystis sp. (strain ATCC 27184 / PCC 6803 / Kazusa)).